Consider the following 216-residue polypeptide: Uracil phosphoribosyltransferase (216 aa).

5-phospho-alpha-D-ribose 1-diphosphate-binding positions include arginine 85, arginine 110, and 135 to 143 (DPMVATGYS). Uracil contacts are provided by residues isoleucine 200 and 205 to 207 (GDA). Aspartate 206 lines the 5-phospho-alpha-D-ribose 1-diphosphate pocket.

The protein belongs to the UPRTase family. It depends on Mg(2+) as a cofactor.

It catalyses the reaction UMP + diphosphate = 5-phospho-alpha-D-ribose 1-diphosphate + uracil. The protein operates within pyrimidine metabolism; UMP biosynthesis via salvage pathway; UMP from uracil: step 1/1. Its activity is regulated as follows. Allosterically activated by GTP. Catalyzes the conversion of uracil and 5-phospho-alpha-D-ribose 1-diphosphate (PRPP) to UMP and diphosphate. This chain is Uracil phosphoribosyltransferase, found in Paraburkholderia phymatum (strain DSM 17167 / CIP 108236 / LMG 21445 / STM815) (Burkholderia phymatum).